The chain runs to 235 residues: Phosphoribosylaminoimidazole-succinocarboxamide synthase (235 aa).

This sequence belongs to the SAICAR synthetase family.

The enzyme catalyses 5-amino-1-(5-phospho-D-ribosyl)imidazole-4-carboxylate + L-aspartate + ATP = (2S)-2-[5-amino-1-(5-phospho-beta-D-ribosyl)imidazole-4-carboxamido]succinate + ADP + phosphate + 2 H(+). Its pathway is purine metabolism; IMP biosynthesis via de novo pathway; 5-amino-1-(5-phospho-D-ribosyl)imidazole-4-carboxamide from 5-amino-1-(5-phospho-D-ribosyl)imidazole-4-carboxylate: step 1/2. In Clostridium perfringens (strain SM101 / Type A), this protein is Phosphoribosylaminoimidazole-succinocarboxamide synthase.